The chain runs to 114 residues: uncharacterized protein (114 aa).

This is an uncharacterized protein from Acanthamoeba polyphaga mimivirus (APMV).